We begin with the raw amino-acid sequence, 425 residues long: Serine--tRNA ligase (425 aa).

Position 233–235 (233–235 (TAE)) interacts with L-serine. 264-266 (RRE) contacts ATP. Residue Glu287 coordinates L-serine. 351 to 354 (EISS) serves as a coordination point for ATP. Ser385 lines the L-serine pocket.

Belongs to the class-II aminoacyl-tRNA synthetase family. Type-1 seryl-tRNA synthetase subfamily. As to quaternary structure, homodimer. The tRNA molecule binds across the dimer.

Its subcellular location is the cytoplasm. The enzyme catalyses tRNA(Ser) + L-serine + ATP = L-seryl-tRNA(Ser) + AMP + diphosphate + H(+). It catalyses the reaction tRNA(Sec) + L-serine + ATP = L-seryl-tRNA(Sec) + AMP + diphosphate + H(+). It participates in aminoacyl-tRNA biosynthesis; selenocysteinyl-tRNA(Sec) biosynthesis; L-seryl-tRNA(Sec) from L-serine and tRNA(Sec): step 1/1. Catalyzes the attachment of serine to tRNA(Ser). Is also able to aminoacylate tRNA(Sec) with serine, to form the misacylated tRNA L-seryl-tRNA(Sec), which will be further converted into selenocysteinyl-tRNA(Sec). The polypeptide is Serine--tRNA ligase (Prochlorococcus marinus (strain MIT 9515)).